Consider the following 892-residue polypeptide: Exo-beta-D-glucosaminidase (892 aa).

An N-terminal signal peptide occupies residues 1-18; that stretch reads MLANAIAALLLGSGIASA. A propeptide spanning residues 19 to 28 is cleaved from the precursor; the sequence is AGHGSPLTSK. N-linked (GlcNAc...) asparagine glycans are attached at residues asparagine 196, asparagine 336, and asparagine 440. Aspartate 464 (proton donor) is an active-site residue. The active-site Nucleophile is glutamate 539. N-linked (GlcNAc...) asparagine glycosylation is found at asparagine 557, asparagine 578, asparagine 689, and asparagine 825.

It belongs to the glycosyl hydrolase 2 family. As to quaternary structure, monomer.

It is found in the secreted. The protein resides in the extracellular space. The enzyme catalyses Hydrolysis of chitosan or chitosan oligosaccharides to remove successive D-glucosamine residues from the non-reducing termini.. Functionally, hydrolyzes chitosan and chitooligosaccharides with retention of anomeric configuration. Has no activity against beta-D-galactoside, beta-D-glucuronide, beta-D-mannoside, chitin, glycol chitosan, cellulose, N,N'-diacetylchitibiose and pNP-GlcNAc. The sequence is that of Exo-beta-D-glucosaminidase from Hypocrea jecorina (Trichoderma reesei).